The primary structure comprises 85 residues: Large ribosomal subunit protein bL27 (85 aa).

The disordered stretch occupies residues 1-21 (MAHKKGGGSTHNGRDSKPKML).

This sequence belongs to the bacterial ribosomal protein bL27 family.

This is Large ribosomal subunit protein bL27 from Albidiferax ferrireducens (strain ATCC BAA-621 / DSM 15236 / T118) (Rhodoferax ferrireducens).